Here is a 453-residue protein sequence, read N- to C-terminus: Chromosomal replication initiator protein DnaA (453 aa).

The domain I, interacts with DnaA modulators stretch occupies residues 1–71 (MSEKEIWEKV…QAILFDVVGY (71 aa)). The segment at 71–114 (YEVKPHFITTEELANYSNNETATPKEATKPSTETTEDNHVLGRE) is domain II. The tract at residues 115–331 (QFNAHNTFDT…GALTRLLAYS (217 aa)) is domain III, AAA+ region. The ATP site is built by Gly-159, Gly-161, Lys-162, and Thr-163. Residues 332–453 (QLLGKPITTE…ENLEKEIRNV (122 aa)) are domain IV, binds dsDNA.

The protein belongs to the DnaA family. As to quaternary structure, oligomerizes as a right-handed, spiral filament on DNA at oriC.

It is found in the cytoplasm. In terms of biological role, plays an essential role in the initiation and regulation of chromosomal replication. ATP-DnaA binds to the origin of replication (oriC) to initiate formation of the DNA replication initiation complex once per cell cycle. Binds the DnaA box (a 9 base pair repeat at the origin) and separates the double-stranded (ds)DNA. Forms a right-handed helical filament on oriC DNA; dsDNA binds to the exterior of the filament while single-stranded (ss)DNA is stabiized in the filament's interior. The ATP-DnaA-oriC complex binds and stabilizes one strand of the AT-rich DNA unwinding element (DUE), permitting loading of DNA polymerase. After initiation quickly degrades to an ADP-DnaA complex that is not apt for DNA replication. Binds acidic phospholipids. The protein is Chromosomal replication initiator protein DnaA of Staphylococcus aureus (strain MRSA252).